A 332-amino-acid chain; its full sequence is SLAM family member 6 (332 aa).

The first 21 residues, 1-21 (MLWLFQSLLFVFCFGPGNVVS), serve as a signal peptide directing secretion. Residues 22–226 (QSSLTPLMVN…VKIQYTDTKM (205 aa)) lie on the Extracellular side of the membrane. In terms of domain architecture, Ig-like V-type spans 35–120 (GESVTLPLEF…ISTKTSAKLS (86 aa)). 7 N-linked (GlcNAc...) asparagine glycosylation sites follow: Asn-58, Asn-87, Asn-137, Asn-144, Asn-161, Asn-178, and Asn-203. An Ig-like C2-type domain is found at 132-209 (NIQVTNHSQL…AVSNLSFSVS (78 aa)). 2 cysteine pairs are disulfide-bonded: Cys-147/Cys-214 and Cys-153/Cys-195. Residues 227-247 (ILFMVSGICIVFGFIILLLLV) traverse the membrane as a helical segment. The Cytoplasmic segment spans residues 248-331 (LRKRRDSLSL…FSRATALDNV (84 aa)). A Phosphotyrosine modification is found at Tyr-274. Ser-278 carries the post-translational modification Phosphoserine. 2 consecutive short sequence motifs (ITSM) follow at residues 283–288 (TVYASV) and 307–312 (TIYSTI). The residue at position 309 (Tyr-309) is a Phosphotyrosine.

As to quaternary structure, homodimer. Interacts with PTN6. Interacts (phosphorylated) with PTN11. Interacts (phosphorylated on tyrosine residues) with SH2D1A/SAP and SH2D1B/EAT2; SH2D1A and SH2D1B can associate with the same SLAMF6 molecule; interaction with SH2D1B is mediated by ITSM 2. Post-translationally, phosphorylation in NK cells upon engagment by SLAMF6-expressing target cells is leading to receptor activation. As to expression, expressed by all (resting and activated) natural killer cells (NK), T- and B-lymphocytes. Increased surface expression on T-cells of systemic lupus erythematosus (SLE) patients.

The protein localises to the cell membrane. Its function is as follows. Self-ligand receptor of the signaling lymphocytic activation molecule (SLAM) family. SLAM receptors triggered by homo- or heterotypic cell-cell interactions are modulating the activation and differentiation of a wide variety of immune cells and thus are involved in the regulation and interconnection of both innate and adaptive immune response. Activities are controlled by presence or absence of small cytoplasmic adapter proteins, SH2D1A/SAP and/or SH2D1B/EAT-2. Triggers cytolytic activity only in natural killer cells (NK) expressing high surface densities of natural cytotoxicity receptors. Positive signaling in NK cells implicates phosphorylation of VAV1. NK cell activation seems to depend on SH2D1B and not on SH2D1A. In conjunction with SLAMF1 controls the transition between positive selection and the subsequent expansion and differentiation of the thymocytic natural killer T (NKT) cell lineage. Promotes T-cell differentiation into a helper T-cell Th17 phenotype leading to increased IL-17 secretion; the costimulatory activity requires SH2D1A. Promotes recruitment of RORC to the IL-17 promoter. In conjunction with SLAMF1 and CD84/SLAMF5 may be a negative regulator of the humoral immune response. In the absence of SH2D1A/SAP can transmit negative signals to CD4(+) T-cells and NKT cells. Negatively regulates germinal center formation by inhibiting T-cell:B-cell adhesion; the function probably implicates increased association with PTPN6/SHP-1 via ITSMs in absence of SH2D1A/SAP. However, reported to be involved in maintaining B-cell tolerance in germinal centers and in preventing autoimmunity. This Homo sapiens (Human) protein is SLAM family member 6 (SLAMF6).